Reading from the N-terminus, the 271-residue chain is Bifunctional protein FolD (271 aa).

NADP(+) contacts are provided by residues 154–156 (GRS), T181, and I222.

Belongs to the tetrahydrofolate dehydrogenase/cyclohydrolase family. As to quaternary structure, homodimer.

It carries out the reaction (6R)-5,10-methylene-5,6,7,8-tetrahydrofolate + NADP(+) = (6R)-5,10-methenyltetrahydrofolate + NADPH. It catalyses the reaction (6R)-5,10-methenyltetrahydrofolate + H2O = (6R)-10-formyltetrahydrofolate + H(+). It functions in the pathway one-carbon metabolism; tetrahydrofolate interconversion. Functionally, catalyzes the oxidation of 5,10-methylenetetrahydrofolate to 5,10-methenyltetrahydrofolate and then the hydrolysis of 5,10-methenyltetrahydrofolate to 10-formyltetrahydrofolate. This chain is Bifunctional protein FolD, found in Thermosipho melanesiensis (strain DSM 12029 / CIP 104789 / BI429).